Consider the following 228-residue polypeptide: Gliolectin (228 aa).

The Cytoplasmic segment spans residues 1 to 120 (MLCPPMALGP…NPKAVSQAPR (120 aa)). A helical; Signal-anchor for type II membrane protein membrane pass occupies residues 121 to 137 (GMALTPAQISASAKLIL). The Extracellular portion of the chain corresponds to 138–228 (QKCPESDRKK…GTSELADQKQ (91 aa)). The tract at residues 141 to 228 (PESDRKKSNG…GTSELADQKQ (88 aa)) is disordered. N-linked (GlcNAc...) asparagine glycans are attached at residues Asn-149, Asn-156, Asn-198, Asn-199, Asn-205, and Asn-218. Low complexity predominate over residues 195–213 (NNNNNSSSSNNNSNMNINN). Polar residues predominate over residues 218–228 (NGTSELADQKQ).

Expressed by a subset of glial cells found at the midline of the embryo stage 12 nervous system. Expression is highest during the formation of the embryonic axonal commissures, a process requiring midline glial cell function (at protein level).

Its subcellular location is the membrane. Its function is as follows. Has a role in intercellular carbohydrate-mediated cell adhesion. In Drosophila melanogaster (Fruit fly), this protein is Gliolectin.